Here is a 762-residue protein sequence, read N- to C-terminus: uncharacterized protein (762 aa).

Positions 1–26 are disordered; that stretch reads MENLKSASPEEDSPRHGDNMGKPKRI. The segment covering 12–21 has biased composition (basic and acidic residues); that stretch reads DSPRHGDNMG. The segment at residues 30–57 is a DNA-binding region (zn(2)-C6 fungal-type); it reads CDMCRKRKIRCDGKQPACSNCVSHGIPC. Residues 647–668 form a disordered region; sequence QSHVPPRISSNHSDTSVKSNSP.

Its subcellular location is the nucleus. This is an uncharacterized protein from Schizosaccharomyces pombe (strain 972 / ATCC 24843) (Fission yeast).